The sequence spans 216 residues: Uracil phosphoribosyltransferase (216 aa).

Position 30 to 34 (30 to 34 (KNLVR)) interacts with GTP. 5-phospho-alpha-D-ribose 1-diphosphate-binding positions include arginine 80, arginine 105, and 140–148 (DPMIATAST). Residues isoleucine 203 and 208 to 210 (GDA) each bind uracil. Aspartate 209 contributes to the 5-phospho-alpha-D-ribose 1-diphosphate binding site.

It belongs to the UPRTase family. It depends on Mg(2+) as a cofactor.

It carries out the reaction UMP + diphosphate = 5-phospho-alpha-D-ribose 1-diphosphate + uracil. The protein operates within pyrimidine metabolism; UMP biosynthesis via salvage pathway; UMP from uracil: step 1/1. Its activity is regulated as follows. Allosterically activated by GTP. In terms of biological role, catalyzes the conversion of uracil and 5-phospho-alpha-D-ribose 1-diphosphate (PRPP) to UMP and diphosphate. The sequence is that of Uracil phosphoribosyltransferase from Saccharolobus islandicus (strain M.16.4 / Kamchatka #3) (Sulfolobus islandicus).